The primary structure comprises 958 residues: Glycine dehydrogenase (decarboxylating) (958 aa).

Lys707 is modified (N6-(pyridoxal phosphate)lysine).

The protein belongs to the GcvP family. As to quaternary structure, the glycine cleavage system is composed of four proteins: P, T, L and H. Pyridoxal 5'-phosphate is required as a cofactor.

The catalysed reaction is N(6)-[(R)-lipoyl]-L-lysyl-[glycine-cleavage complex H protein] + glycine + H(+) = N(6)-[(R)-S(8)-aminomethyldihydrolipoyl]-L-lysyl-[glycine-cleavage complex H protein] + CO2. Its function is as follows. The glycine cleavage system catalyzes the degradation of glycine. The P protein binds the alpha-amino group of glycine through its pyridoxal phosphate cofactor; CO(2) is released and the remaining methylamine moiety is then transferred to the lipoamide cofactor of the H protein. This chain is Glycine dehydrogenase (decarboxylating), found in Stutzerimonas stutzeri (strain A1501) (Pseudomonas stutzeri).